Reading from the N-terminus, the 444-residue chain is Glutamate-1-semialdehyde 2,1-aminomutase (444 aa).

Lys-267 is subject to N6-(pyridoxal phosphate)lysine.

Belongs to the class-III pyridoxal-phosphate-dependent aminotransferase family. HemL subfamily. As to quaternary structure, homodimer. Requires pyridoxal 5'-phosphate as cofactor.

It localises to the cytoplasm. It carries out the reaction (S)-4-amino-5-oxopentanoate = 5-aminolevulinate. Its pathway is porphyrin-containing compound metabolism; protoporphyrin-IX biosynthesis; 5-aminolevulinate from L-glutamyl-tRNA(Glu): step 2/2. This is Glutamate-1-semialdehyde 2,1-aminomutase from Xylella fastidiosa (strain Temecula1 / ATCC 700964).